Reading from the N-terminus, the 257-residue chain is 5'-nucleotidase SurE (257 aa).

A divalent metal cation is bound by residues aspartate 8, aspartate 9, serine 39, and asparagine 87. Positions valine 234–glutamine 257 are disordered.

Belongs to the SurE nucleotidase family. A divalent metal cation serves as cofactor.

It localises to the cytoplasm. It carries out the reaction a ribonucleoside 5'-phosphate + H2O = a ribonucleoside + phosphate. Functionally, nucleotidase that shows phosphatase activity on nucleoside 5'-monophosphates. In Natronomonas pharaonis (strain ATCC 35678 / DSM 2160 / CIP 103997 / JCM 8858 / NBRC 14720 / NCIMB 2260 / Gabara) (Halobacterium pharaonis), this protein is 5'-nucleotidase SurE.